Consider the following 82-residue polypeptide: Defensin-like protein 156 (82 aa).

The signal sequence occupies residues Met1–Gly27. 4 cysteine pairs are disulfide-bonded: Cys31/Cys77, Cys41/Cys60, Cys46/Cys71, and Cys50/Cys73.

Belongs to the DEFL family. As to expression, expressed in flower buds, but not in stems, roots or rosette leaves.

Its subcellular location is the secreted. This Arabidopsis thaliana (Mouse-ear cress) protein is Defensin-like protein 156 (LCR21).